Consider the following 227-residue polypeptide: Cytochrome c oxidase subunit 2 (227 aa).

Residues 1–14 (MAYPFELGFQDATS) lie on the Mitochondrial intermembrane side of the membrane. The helical transmembrane segment at 15-45 (PIMEELLHFHDHTLMIVFLISSLVLYIISLM) threads the bilayer. Residues 46–59 (LTTKLTHTSTMDAQ) lie on the Mitochondrial matrix side of the membrane. Residues 60–87 (EIETIWTILPAIILILIALPSLRILYMM) traverse the membrane as a helical segment. At 88-227 (DEINDPSLTV…HFENWSSSML (140 aa)) the chain is on the mitochondrial intermembrane side. The Cu cation site is built by histidine 161, cysteine 196, glutamate 198, cysteine 200, histidine 204, and methionine 207. Glutamate 198 is a Mg(2+) binding site.

Belongs to the cytochrome c oxidase subunit 2 family. As to quaternary structure, component of the cytochrome c oxidase (complex IV, CIV), a multisubunit enzyme composed of 14 subunits. The complex is composed of a catalytic core of 3 subunits MT-CO1, MT-CO2 and MT-CO3, encoded in the mitochondrial DNA, and 11 supernumerary subunits COX4I, COX5A, COX5B, COX6A, COX6B, COX6C, COX7A, COX7B, COX7C, COX8 and NDUFA4, which are encoded in the nuclear genome. The complex exists as a monomer or a dimer and forms supercomplexes (SCs) in the inner mitochondrial membrane with NADH-ubiquinone oxidoreductase (complex I, CI) and ubiquinol-cytochrome c oxidoreductase (cytochrome b-c1 complex, complex III, CIII), resulting in different assemblies (supercomplex SCI(1)III(2)IV(1) and megacomplex MCI(2)III(2)IV(2)). Found in a complex with TMEM177, COA6, COX18, COX20, SCO1 and SCO2. Interacts with TMEM177 in a COX20-dependent manner. Interacts with COX20. Interacts with COX16. Requires Cu cation as cofactor.

It localises to the mitochondrion inner membrane. The catalysed reaction is 4 Fe(II)-[cytochrome c] + O2 + 8 H(+)(in) = 4 Fe(III)-[cytochrome c] + 2 H2O + 4 H(+)(out). Its function is as follows. Component of the cytochrome c oxidase, the last enzyme in the mitochondrial electron transport chain which drives oxidative phosphorylation. The respiratory chain contains 3 multisubunit complexes succinate dehydrogenase (complex II, CII), ubiquinol-cytochrome c oxidoreductase (cytochrome b-c1 complex, complex III, CIII) and cytochrome c oxidase (complex IV, CIV), that cooperate to transfer electrons derived from NADH and succinate to molecular oxygen, creating an electrochemical gradient over the inner membrane that drives transmembrane transport and the ATP synthase. Cytochrome c oxidase is the component of the respiratory chain that catalyzes the reduction of oxygen to water. Electrons originating from reduced cytochrome c in the intermembrane space (IMS) are transferred via the dinuclear copper A center (CU(A)) of subunit 2 and heme A of subunit 1 to the active site in subunit 1, a binuclear center (BNC) formed by heme A3 and copper B (CU(B)). The BNC reduces molecular oxygen to 2 water molecules using 4 electrons from cytochrome c in the IMS and 4 protons from the mitochondrial matrix. The chain is Cytochrome c oxidase subunit 2 (MT-CO2) from Tamias townsendii (Townsend's chipmunk).